Consider the following 860-residue polypeptide: M-phase phosphoprotein 8 (860 aa).

N-acetylmethionine is present on methionine 1. Phosphoserine occurs at positions 51, 85, 136, and 138. Positions 59 to 118 (FEVEKILDMKTEGGKVLYKVRWKGYTSDDDTWEPEIHLEDCKEVLLEFRKKIAENKAKAV) constitute a Chromo domain. The histone H3K9me3 binding stretch occupies residues 80–87 (WKGYTSDD). Residues 129-141 (NDIFEANSDSDQQ) show a composition bias toward polar residues. The tract at residues 129–191 (NDIFEANSDS…SKPDLESSLE (63 aa)) is disordered. The residue at position 144 (threonine 144) is a Phosphothreonine. Phosphoserine; by CDK1 is present on residues serine 149 and serine 164. 2 stretches are compositionally biased toward basic and acidic residues: residues 159–169 (QREEKSPDDLK) and 177–186 (KLKDKSKPDL). Phosphoserine is present on residues serine 188, serine 189, and serine 192. Positions 206-249 (AKEELKESKKPKKDEVKETKELKKVKKGEIRDLKTKTREDPKEN) are enriched in basic and acidic residues. The disordered stretch occupies residues 206–440 (AKEELKESKK…GRKEPKGLKT (235 aa)). Residues 259–268 (ESQVESESSV) show a composition bias toward low complexity. Phosphoserine is present on residues serine 266, serine 272, and serine 279. The span at 280–314 (EGLHSDSREEKQNTKSARERAGQDMGLEHGFEKPL) shows a compositional bias: basic and acidic residues. Residue serine 319 is modified to Phosphoserine. Threonine 334 carries the post-translational modification Phosphothreonine; by CDK1. Basic and acidic residues predominate over residues 336-377 (RKAEDTRENRKLENKNAFLEKKTVPKKQRNQDRSKSAAELEK). Threonine 385 bears the Phosphothreonine; by CDK1 mark. Phosphoserine is present on residues serine 392, serine 400, and serine 403. Over residues 408–440 (KETKRNESKEKYQKRHDSDKEEKGRKEPKGLKT) the composition is skewed to basic and acidic residues. The tract at residues 431 to 560 (GRKEPKGLKT…HLDGKDENFA (130 aa)) is interaction with humanin. Threonine 454 bears the Phosphothreonine mark. Residues 458–496 (KNDVSENNRKREEIPLDFKTIDDHKTKENKQSLKERRNT) form a disordered region. ANK repeat units lie at residues 600-629 (SGMTLVMLAAAGGQDDLLRLLITKGAKVNG), 633-662 (NGTTALIHAAEKNFLTTVAILLEAGAFVNV), 666-695 (NGETALMKACKRGNSDIVRLVIECGADCNI), and 699-728 (HQNSALHFAKQSNNVLVYDLLKNHLETLSR).

As to quaternary structure, homodimer. Interacts (via chromo domain) with histone H3K9me3. Has the highest affinity for H3K9me3, and lesser affinity for H3K9me2 and H3K9me1. Component of the HUSH complex; at least composed of TASOR, PPHLN1 and MPHOSPH8. Interacts with DNMT3, EHMT1 and SETDB1. Interacts with MORC2; the interaction associateS MORC2 with the HUSH complex which recruits MORC2 to heterochromatic loci. Interacts with ZNF638; leading to recruitment of the HUSH complex to unintegrated retroviral DNA. Interacts with TASOR. Interacts with humanin. In terms of processing, phosphorylated in M (mitotic) phase. Phosphorylation by CDK1 promotes dissociation from chromatin.

It localises to the nucleus. The protein localises to the chromosome. Heterochromatin component that specifically recognizes and binds methylated 'Lys-9' of histone H3 (H3K9me) and promotes recruitment of proteins that mediate epigenetic repression. Mediates recruitment of the HUSH complex to H3K9me3 sites: the HUSH complex is recruited to genomic loci rich in H3K9me3 and is required to maintain transcriptional silencing by promoting recruitment of SETDB1, a histone methyltransferase that mediates further deposition of H3K9me3, as well as MORC2. Binds H3K9me and promotes DNA methylation by recruiting DNMT3A to target CpG sites; these can be situated within the coding region of the gene. Mediates down-regulation of CDH1 expression. Also represses L1 retrotransposons in collaboration with MORC2 and, probably, SETDB1, the silencing is dependent of repressive epigenetic modifications, such as H3K9me3 mark. Silencing events often occur within introns of transcriptionally active genes, and lead to the down-regulation of host gene expression. The HUSH complex is also involved in the silencing of unintegrated retroviral DNA by being recruited by ZNF638: some part of the retroviral DNA formed immediately after infection remains unintegrated in the host genome and is transcriptionally repressed. This Homo sapiens (Human) protein is M-phase phosphoprotein 8.